The primary structure comprises 364 residues: tRNA 2-selenouridine synthase (364 aa).

The region spanning 14–137 is the Rhodanese domain; it reads LLADTPLIDV…LRQTAIQATW (124 aa). The active-site S-selanylcysteine intermediate is Cys97.

This sequence belongs to the SelU family. As to quaternary structure, monomer.

The enzyme catalyses 5-methylaminomethyl-2-thiouridine(34) in tRNA + selenophosphate + (2E)-geranyl diphosphate + H2O + H(+) = 5-methylaminomethyl-2-selenouridine(34) in tRNA + (2E)-thiogeraniol + phosphate + diphosphate. The catalysed reaction is 5-methylaminomethyl-2-thiouridine(34) in tRNA + (2E)-geranyl diphosphate = 5-methylaminomethyl-S-(2E)-geranyl-thiouridine(34) in tRNA + diphosphate. It carries out the reaction 5-methylaminomethyl-S-(2E)-geranyl-thiouridine(34) in tRNA + selenophosphate + H(+) = 5-methylaminomethyl-2-(Se-phospho)selenouridine(34) in tRNA + (2E)-thiogeraniol. It catalyses the reaction 5-methylaminomethyl-2-(Se-phospho)selenouridine(34) in tRNA + H2O = 5-methylaminomethyl-2-selenouridine(34) in tRNA + phosphate. In terms of biological role, involved in the post-transcriptional modification of the uridine at the wobble position (U34) of tRNA(Lys), tRNA(Glu) and tRNA(Gln). Catalyzes the conversion of 2-thiouridine (S2U-RNA) to 2-selenouridine (Se2U-RNA). Acts in a two-step process involving geranylation of 2-thiouridine (S2U) to S-geranyl-2-thiouridine (geS2U) and subsequent selenation of the latter derivative to 2-selenouridine (Se2U) in the tRNA chain. The polypeptide is tRNA 2-selenouridine synthase (Salmonella agona (strain SL483)).